A 209-amino-acid polypeptide reads, in one-letter code: Molybdenum cofactor guanylyltransferase (209 aa).

GTP contacts are provided by residues 13–15 (LAG), K26, N54, D74, and D104. Residue D104 coordinates Mg(2+).

It belongs to the MobA family. Monomer. Requires Mg(2+) as cofactor.

The protein localises to the cytoplasm. It carries out the reaction Mo-molybdopterin + GTP + H(+) = Mo-molybdopterin guanine dinucleotide + diphosphate. Functionally, transfers a GMP moiety from GTP to Mo-molybdopterin (Mo-MPT) cofactor (Moco or molybdenum cofactor) to form Mo-molybdopterin guanine dinucleotide (Mo-MGD) cofactor. This Acinetobacter baumannii (strain ACICU) protein is Molybdenum cofactor guanylyltransferase.